The sequence spans 122 residues: MIQRGTYLNTADNSGAKLVQCIGIPGGAKKMHATVGDVITVTVKSAIPSGTAKKGKVYKAVVVRTKKEVARPDGSYVKADDNAVVLLNNQLEPIGTRILGPVCRELRSKGFYRIVSLAPEVI.

Belongs to the universal ribosomal protein uL14 family. Part of the 50S ribosomal subunit. Forms a cluster with proteins L3 and L19. In the 70S ribosome, L14 and L19 interact and together make contacts with the 16S rRNA in bridges B5 and B8.

In terms of biological role, binds to 23S rRNA. Forms part of two intersubunit bridges in the 70S ribosome. This Sulfurihydrogenibium sp. (strain YO3AOP1) protein is Large ribosomal subunit protein uL14.